Consider the following 355-residue polypeptide: Protein-glutamate methylesterase/protein-glutamine glutaminase 3 (355 aa).

Residues 5 to 122 enclose the Response regulatory domain; it reads KVLIVDDSAV…KQFLEESRVR (118 aa). Asp-56 carries the post-translational modification 4-aspartylphosphate. A CheB-type methylesterase domain is found at 165–355; that stretch reads IQTTEKVVVV…IAREVLRLCG (191 aa). Residues Ser-177, His-203, and Asp-299 contribute to the active site.

The protein belongs to the CheB family. In terms of processing, phosphorylated by CheA. Phosphorylation of the N-terminal regulatory domain activates the methylesterase activity.

The protein localises to the cytoplasm. The catalysed reaction is [protein]-L-glutamate 5-O-methyl ester + H2O = L-glutamyl-[protein] + methanol + H(+). The enzyme catalyses L-glutaminyl-[protein] + H2O = L-glutamyl-[protein] + NH4(+). Functionally, involved in chemotaxis. Part of a chemotaxis signal transduction system that modulates chemotaxis in response to various stimuli. Catalyzes the demethylation of specific methylglutamate residues introduced into the chemoreceptors (methyl-accepting chemotaxis proteins or MCP) by CheR. Also mediates the irreversible deamidation of specific glutamine residues to glutamic acid. This Geobacter metallireducens (strain ATCC 53774 / DSM 7210 / GS-15) protein is Protein-glutamate methylesterase/protein-glutamine glutaminase 3.